A 391-amino-acid polypeptide reads, in one-letter code: Somatostatin receptor type 1 (391 aa).

The interval 1–50 is disordered; that stretch reads MFPNGTASSPSSSPSPSPGSCGEGACSRGPGSGAADGMEEPGRNASQNGT. Residues 1-56 are Extracellular-facing; that stretch reads MFPNGTASSPSSSPSPSPGSCGEGACSRGPGSGAADGMEEPGRNASQNGTLSEGQG. An N-linked (GlcNAc...) asparagine glycan is attached at asparagine 4. Positions 8 to 20 are enriched in low complexity; the sequence is SSPSSSPSPSPGS. Asparagine 44 and asparagine 48 each carry an N-linked (GlcNAc...) asparagine glycan. A helical membrane pass occupies residues 57-84; sequence SAILISFIYSVVCLVGLCGNSMVIYVIL. Residues 85–94 are Cytoplasmic-facing; that stretch reads RYAKMKTATN. The chain crosses the membrane as a helical span at residues 95 to 120; sequence IYILNLAIADELLMLSVPFLVTSTLL. Over 121 to 131 the chain is Extracellular; sequence RHWPFGALLCR. The cysteines at positions 130 and 208 are disulfide-linked. Residues 132–153 form a helical membrane-spanning segment; that stretch reads LVLSVDAVNMFTSIYCLTVLSV. The Cytoplasmic portion of the chain corresponds to 154-175; the sequence is DRYVAVVHPIKAARYRRPTVAK. A helical membrane pass occupies residues 176 to 196; the sequence is VVNLGVWVLSLLVILPIVVFS. The Extracellular portion of the chain corresponds to 197–219; that stretch reads RTAANSDGTVACNMLMPEPAQRW. Residues 220 to 244 traverse the membrane as a helical segment; that stretch reads LVGFVLYTFLMGFLLPVGAICLCYV. The Cytoplasmic segment spans residues 245–270; sequence LIIAKMRMVALKAGWQQRKRSERKIT. Residues 271 to 296 traverse the membrane as a helical segment; that stretch reads LMVMMVVMVFVICWMPFYVVQLVNVF. The Extracellular segment spans residues 297–303; the sequence is AEQDDAT. The helical transmembrane segment at 304–327 threads the bilayer; the sequence is VSQLSVILGYANSCANPILYGFLS. Topologically, residues 328–391 are cytoplasmic; sequence DNFKRSFQRI…GTCASRISTL (64 aa). Cysteine 339 is lipidated: S-palmitoyl cysteine.

Belongs to the G-protein coupled receptor 1 family. In terms of tissue distribution, jejunum and stomach.

It localises to the cell membrane. Functionally, receptor for somatostatin with higher affinity for somatostatin-14 than -28. This receptor is coupled via pertussis toxin sensitive G proteins to inhibition of adenylyl cyclase. In addition it stimulates phosphotyrosine phosphatase and Na(+)/H(+) exchanger via pertussis toxin insensitive G proteins. This Mus musculus (Mouse) protein is Somatostatin receptor type 1 (Sstr1).